The chain runs to 747 residues: Sex-specific storage-protein 1 (747 aa).

The N-terminal stretch at 1–15 (MRVLVLLACLAAASA) is a signal peptide. N-linked (GlcNAc...) asparagine glycosylation is found at Asn494 and Asn706.

This sequence belongs to the hemocyanin family. Fat body.

Its subcellular location is the secreted. It is found in the extracellular space. Its function is as follows. Larval storage protein (LSP) which may serve as a store of amino acids for synthesis of adult proteins. In Bombyx mori (Silk moth), this protein is Sex-specific storage-protein 1 (SP1).